Here is a 296-residue protein sequence, read N- to C-terminus: Ribosomal protein L11 methyltransferase (296 aa).

S-adenosyl-L-methionine is bound by residues Thr139, Gly163, Asp185, and Asn232.

Belongs to the methyltransferase superfamily. PrmA family.

Its subcellular location is the cytoplasm. The catalysed reaction is L-lysyl-[protein] + 3 S-adenosyl-L-methionine = N(6),N(6),N(6)-trimethyl-L-lysyl-[protein] + 3 S-adenosyl-L-homocysteine + 3 H(+). Methylates ribosomal protein L11. This is Ribosomal protein L11 methyltransferase from Rippkaea orientalis (strain PCC 8801 / RF-1) (Cyanothece sp. (strain PCC 8801)).